A 307-amino-acid polypeptide reads, in one-letter code: MNHATSELHDESAVTSIPETTRLQDLKALVKMGIVNSNTLTVFTGFWLALHFNGLSVLDNLDKLFFTIVGSGLVMAGVCCLNNYIDRDIDPLMERTKTRPTVTGKYKPGFALTFGLVILLLGFVFLLLTTPMAVLMGFIGAFTYVVLYSLWTKRKYTLNTVVGSISGAVPPLIGWAAIDPSLGHPIAWMLFLIMFIWQIPHFLALAMKRVDEYRNAGIPMLPVVHGFEITKRQIMIWTVCLLPLPFYMSGLGITFMVIATLLNIGWIVLGFYGFRKKDDIKWSVQMFVYSLNYLTILFVSMIVVTFF.

8 helical membrane passes run 38–58 (NTLTVFTGFWLALHFNGLSVL), 65–85 (FFTIVGSGLVMAGVCCLNNYI), 108–128 (PGFALTFGLVILLLGFVFLLL), 131–151 (PMAVLMGFIGAFTYVVLYSLW), 158–178 (LNTVVGSISGAVPPLIGWAAI), 186–206 (IAWMLFLIMFIWQIPHFLALA), 251–271 (LGITFMVIATLLNIGWIVLGF), and 287–307 (FVYSLNYLTILFVSMIVVTFF).

This sequence belongs to the UbiA prenyltransferase family. Protoheme IX farnesyltransferase subfamily. As to quaternary structure, interacts with CtaA.

It localises to the cell membrane. The enzyme catalyses heme b + (2E,6E)-farnesyl diphosphate + H2O = Fe(II)-heme o + diphosphate. It functions in the pathway porphyrin-containing compound metabolism; heme O biosynthesis; heme O from protoheme: step 1/1. In terms of biological role, converts heme B (protoheme IX) to heme O by substitution of the vinyl group on carbon 2 of heme B porphyrin ring with a hydroxyethyl farnesyl side group. The polypeptide is Protoheme IX farnesyltransferase (Bacillus thuringiensis (strain Al Hakam)).